Consider the following 157-residue polypeptide: Crossover junction endodeoxyribonuclease RuvC (157 aa).

Active-site residues include Asp-7, Glu-66, and Asp-139. Asp-7, Glu-66, and Asp-139 together coordinate Mg(2+).

It belongs to the RuvC family. As to quaternary structure, homodimer which binds Holliday junction (HJ) DNA. The HJ becomes 2-fold symmetrical on binding to RuvC with unstacked arms; it has a different conformation from HJ DNA in complex with RuvA. In the full resolvosome a probable DNA-RuvA(4)-RuvB(12)-RuvC(2) complex forms which resolves the HJ. The cofactor is Mg(2+).

It is found in the cytoplasm. It catalyses the reaction Endonucleolytic cleavage at a junction such as a reciprocal single-stranded crossover between two homologous DNA duplexes (Holliday junction).. The RuvA-RuvB-RuvC complex processes Holliday junction (HJ) DNA during genetic recombination and DNA repair. Endonuclease that resolves HJ intermediates. Cleaves cruciform DNA by making single-stranded nicks across the HJ at symmetrical positions within the homologous arms, yielding a 5'-phosphate and a 3'-hydroxyl group; requires a central core of homology in the junction. The consensus cleavage sequence is 5'-(A/T)TT(C/G)-3'. Cleavage occurs on the 3'-side of the TT dinucleotide at the point of strand exchange. HJ branch migration catalyzed by RuvA-RuvB allows RuvC to scan DNA until it finds its consensus sequence, where it cleaves and resolves the cruciform DNA. The polypeptide is Crossover junction endodeoxyribonuclease RuvC (Helicobacter acinonychis (strain Sheeba)).